The primary structure comprises 277 residues: Membrane protein insertase YidC 2 (277 aa).

The first 22 residues, methionine 1–glycine 22, serve as a signal peptide directing secretion. A lipid anchor (N-palmitoyl cysteine) is attached at cysteine 23. Cysteine 23 is lipidated: S-diacylglycerol cysteine. Helical transmembrane passes span phenylalanine 35 to phenylalanine 55, glycine 60 to phenylalanine 80, alanine 130 to tryptophan 150, proline 170 to methionine 190, and proline 208 to isoleucine 228. Positions glutamate 251 to lysine 266 are enriched in basic and acidic residues. Positions glutamate 251–arginine 277 are disordered. Residues alanine 267–arginine 277 show a composition bias toward basic residues.

The protein belongs to the OXA1/ALB3/YidC family. Type 2 subfamily.

It is found in the cell membrane. Required for the insertion and/or proper folding and/or complex formation of integral membrane proteins into the membrane. Involved in integration of membrane proteins that insert both dependently and independently of the Sec translocase complex, as well as at least some lipoproteins. This Lactiplantibacillus plantarum (strain ATCC BAA-793 / NCIMB 8826 / WCFS1) (Lactobacillus plantarum) protein is Membrane protein insertase YidC 2.